The sequence spans 545 residues: Chaperonin GroEL (545 aa).

ATP contacts are provided by residues 29–32, Lys-50, 86–90, Gly-413, and Asp-495; these read TLGP and DGTTT.

It belongs to the chaperonin (HSP60) family. As to quaternary structure, forms a cylinder of 14 subunits composed of two heptameric rings stacked back-to-back. Interacts with the co-chaperonin GroES.

Its subcellular location is the cytoplasm. The catalysed reaction is ATP + H2O + a folded polypeptide = ADP + phosphate + an unfolded polypeptide.. Together with its co-chaperonin GroES, plays an essential role in assisting protein folding. The GroEL-GroES system forms a nano-cage that allows encapsulation of the non-native substrate proteins and provides a physical environment optimized to promote and accelerate protein folding. The polypeptide is Chaperonin GroEL (Borreliella afzelii (strain PKo) (Borrelia afzelii)).